Here is a 100-residue protein sequence, read N- to C-terminus: Urease subunit gamma (100 aa).

This sequence belongs to the urease gamma subunit family. In terms of assembly, heterotrimer of UreA (gamma), UreB (beta) and UreC (alpha) subunits. Three heterotrimers associate to form the active enzyme.

It is found in the cytoplasm. The catalysed reaction is urea + 2 H2O + H(+) = hydrogencarbonate + 2 NH4(+). It participates in nitrogen metabolism; urea degradation; CO(2) and NH(3) from urea (urease route): step 1/1. The protein is Urease subunit gamma of Cereibacter sphaeroides (strain ATCC 17025 / ATH 2.4.3) (Rhodobacter sphaeroides).